Here is a 431-residue protein sequence, read N- to C-terminus: Phosphoribosylamine--glycine ligase (431 aa).

Residues 109-316 form the ATP-grasp domain; that stretch reads KDFLARHGIP…LVDLVEAAID (208 aa). ATP is bound at residue 135-196; the sequence is VREKGAPIVV…EEFLDGEEAS (62 aa). Glutamate 286 and asparagine 288 together coordinate Mg(2+).

This sequence belongs to the GARS family. It depends on Mg(2+) as a cofactor. Mn(2+) serves as cofactor.

The enzyme catalyses 5-phospho-beta-D-ribosylamine + glycine + ATP = N(1)-(5-phospho-beta-D-ribosyl)glycinamide + ADP + phosphate + H(+). It participates in purine metabolism; IMP biosynthesis via de novo pathway; N(1)-(5-phospho-D-ribosyl)glycinamide from 5-phospho-alpha-D-ribose 1-diphosphate: step 2/2. This Xanthomonas campestris pv. campestris (strain ATCC 33913 / DSM 3586 / NCPPB 528 / LMG 568 / P 25) protein is Phosphoribosylamine--glycine ligase.